Here is a 538-residue protein sequence, read N- to C-terminus: Putative outer membrane porin BglH (538 aa).

The N-terminal stretch at 1-25 is a signal peptide; sequence MFRRNIITSAILLMAPLAFSAQSLA.

It belongs to the porin LamB (TC 1.B.3) family.

The protein resides in the cell outer membrane. May be a sugar porin with a broad carbohydrate specificity. In Escherichia coli O6:H1 (strain CFT073 / ATCC 700928 / UPEC), this protein is Putative outer membrane porin BglH (bglH).